A 561-amino-acid chain; its full sequence is Liver carboxylesterase B-1 (561 aa).

The N-terminal stretch at 1-18 is a signal peptide; that stretch reads MCLRSLFLVSLATCVVCG. Asn79 carries N-linked (GlcNAc...) asparagine glycosylation. Cys87 and Cys116 are joined by a disulfide. The Acyl-ester intermediate role is filled by Ser221. Cys273 and Cys284 are disulfide-bonded. Active-site charge relay system residues include Glu353 and His466. Positions 558 to 561 match the Prevents secretion from ER motif; that stretch reads HNEL.

This sequence belongs to the type-B carboxylesterase/lipase family. Monomer.

The protein resides in the endoplasmic reticulum lumen. The catalysed reaction is a carboxylic ester + H2O = an alcohol + a carboxylate + H(+). Its function is as follows. Involved in the detoxification of xenobiotics and in the activation of ester and amide prodrugs. The chain is Liver carboxylesterase B-1 from Rattus norvegicus (Rat).